A 367-amino-acid chain; its full sequence is Farnesyl pyrophosphate synthase (367 aa).

Residues Lys71, Arg74, and Gln110 each coordinate isopentenyl diphosphate. Positions 117 and 121 each coordinate Mg(2+). Arg126 contacts dimethylallyl diphosphate. Arg127 contacts isopentenyl diphosphate. Positions 214, 215, 254, 271, and 280 each coordinate dimethylallyl diphosphate.

The protein belongs to the FPP/GGPP synthase family. As to quaternary structure, homodimer. Mg(2+) is required as a cofactor.

It localises to the cytoplasm. The catalysed reaction is isopentenyl diphosphate + dimethylallyl diphosphate = (2E)-geranyl diphosphate + diphosphate. The enzyme catalyses isopentenyl diphosphate + (2E)-geranyl diphosphate = (2E,6E)-farnesyl diphosphate + diphosphate. It participates in isoprenoid biosynthesis; farnesyl diphosphate biosynthesis; farnesyl diphosphate from geranyl diphosphate and isopentenyl diphosphate: step 1/1. Its pathway is isoprenoid biosynthesis; geranyl diphosphate biosynthesis; geranyl diphosphate from dimethylallyl diphosphate and isopentenyl diphosphate: step 1/1. Its function is as follows. Catalyzes the sequential condensation of isopentenyl pyrophosphate with the allylic pyrophosphates, dimethylallyl pyrophosphate, and then with the resultant geranylpyrophosphate to the ultimate product farnesyl pyrophosphate. In Gallus gallus (Chicken), this protein is Farnesyl pyrophosphate synthase (FDPS).